We begin with the raw amino-acid sequence, 2622 residues long: Ankyrin-3 (2622 aa).

Residues 1–44 (MAHAASQLKKNRDLEINAEEETEKKKKHRKRSRDRKKKSDANAS) form a disordered region. Residues 25-38 (KKKHRKRSRDRKKK) are compositionally biased toward basic residues. Residue Ser-39 is modified to Phosphoserine. 23 ANK repeats span residues 73 to 102 (NGLN…NVDA), 106 to 135 (KGNT…NVNA), 139 to 168 (NGFT…SQSL), 172 to 201 (DGFT…KGKV), 203 to 230 (LPAL…NADI), 242 to 271 (SGFT…AVDF), 275 to 304 (NDIT…KIDA), 308 to 337 (DGLT…PILS), 341 to 370 (NGLS…PVDD), 374 to 403 (DYLT…NPNA), 407 to 436 (NGFT…SIQA), 440 to 469 (SGLT…SPNT), 473 to 502 (RGET…QVEA), 506 to 535 (DDQT…SPNA), 539 to 568 (SGYT…SLSI), 572 to 601 (KGFT…SPDA), 605 to 634 (SGLT…SPHA), 638 to 667 (NGYT…DANA), 671 to 700 (QGIA…NVNL), 704 to 733 (SGLT…HVDA), 737 to 766 (MGYT…KVNA), 770 to 799 (NGYT…SPNE), and 803 to 832 (NGNT…EIMT). At Ser-631 the chain carries Phosphoserine. A phosphoserine mark is found at Val-851, Ser-855, Ser-869, Ser-875, Ser-921, Ser-924, Ser-930, Ser-965, Ser-967, and Ser-1121. Residues 868-889 (LSDGEYISDGEEGEDAITGDTD) form a disordered region. A compositionally biased stretch (acidic residues) spans 873–884 (YISDGEEGEDAI). ZU5 domains lie at 992-1147 (FLVS…VVSR) and 1149-1296 (KQES…LADC). Phosphoserine is present on residues Ser-1458 and Ser-1469. A disordered region spans residues 1510-1539 (TPITVPGPAKSGSLSSSPSNTPSASPLKSI). The span at 1515–1536 (PGPAKSGSLSSSPSNTPSASPL) shows a compositional bias: low complexity. 7 positions are modified to phosphoserine: Ser-1621, Ser-1624, Ser-1679, Ser-1984, Ser-2102, Ser-2114, and Ser-2117. Disordered regions lie at residues 1968–1992 (VESK…WTEF), 2099–2147 (ILES…FHEV), and 2292–2312 (SPDV…KDNQ). Positions 1977-1986 (PKSDKGHSPE) are enriched in basic and acidic residues. Residues 2106 to 2127 (FSQHDQDKSPLSDSGFETRSEK) show a composition bias toward basic and acidic residues. The span at 2128–2137 (TPSAPQSAES) shows a compositional bias: polar residues. The region spanning 2336 to 2420 (TDIRMAIVAD…DIVTLLEGPI (85 aa)) is the Death domain. Phosphoserine is present on residues Ser-2457, Ser-2475, and Ser-2544. Residues 2568–2622 (CVPVGMKKMTRTPADGKARLNLQEEEGSARSEPKQGEGYKVKTKKEIRNVEKKAH) are disordered. The span at 2594 to 2622 (GSARSEPKQGEGYKVKTKKEIRNVEKKAH) shows a compositional bias: basic and acidic residues.

As to quaternary structure, may be a constituent of a NFASC/NRCAM/ankyrin G complex. Interacts with RHBG. Directly interacts with DMD and betaDAG1; this interaction does not interfere with DMD-binding and is required for DMD and betaDAG1 retention at costameres. Interacts (via N-terminal ANK repeats) with SCHIP1 isoform 7 (via C-terminus); this interaction is required for the localization at axon initial segments (AISs) and nodes of Ranvier (NRs). Interacts with PLEC and FLNC. Interacts (via ANK repeats) with IQCJ-SCHIP1; required for IQCJ-SCHIP1 localization at axon initial segments (AIS) and nodes of Ranvier. Interacts with SCHIP1. Interacts with KCNA1; this inhibits channel activity. Interacts with SCN5A. Interacts with PKP2 and GJA1/CX43. In terms of assembly, interacts (via its C-terminal muscle-specific Obscurin/Titin-Binding-related domain sequence) with PLEC and FLNC. In terms of tissue distribution, expressed in the heart (at protein level). Expressed in skeletal muscle (at protein level). Expressed at highest levels in brain and testis, followed by skin, kidney, liver and spleen. As to expression, may be specifically expressed in muscle tissues, including heart and skeletal muscle (extensor digitorum longus) (at protein level). Expressed in skeletal muscle, brain, lung, heart, testes and kidney.

Its subcellular location is the cytoplasm. The protein resides in the cytoskeleton. The protein localises to the cell projection. It is found in the axon. It localises to the cell membrane. Its subcellular location is the sarcolemma. The protein resides in the postsynaptic cell membrane. The protein localises to the lysosome. It is found in the T-tubule. Membrane-cytoskeleton linker. May participate in the maintenance/targeting of ion channels and cell adhesion molecules at the nodes of Ranvier and axonal initial segments. In skeletal muscle, required for costamere localization of DMD and betaDAG1. Regulates KCNA1 channel activity in function of dietary Mg(2+) levels, and thereby contributes to the regulation of renal Mg(2+) reabsorption. Required for intracellular adhesion and junctional conductance in myocytes, potentially via stabilization of GJA1/CX43 protein abundance and promotion of PKP2, GJA1/CX43, and SCN5A/Nav1.5 localization to cell-cell junctions. This Rattus norvegicus (Rat) protein is Ankyrin-3 (Ank3).